A 112-amino-acid polypeptide reads, in one-letter code: Photosystem II reaction center Psb28 protein (112 aa).

It belongs to the Psb28 family. In terms of assembly, part of the photosystem II complex.

The protein localises to the plastid. The protein resides in the cyanelle thylakoid membrane. The polypeptide is Photosystem II reaction center Psb28 protein (Cyanophora paradoxa).